The primary structure comprises 413 residues: Lipoyl synthase, mitochondrial (413 aa).

The transit peptide at 1–33 (MAAATNRFRALYSSSRVATPQAGSASYLSYRGY) directs the protein to the mitochondrion. Positions 133, 138, 144, 164, 168, 171, and 379 each coordinate [4Fe-4S] cluster. A Radical SAM core domain is found at 147-368 (GGDKAAATAT…RQRALDMGFL (222 aa)).

This sequence belongs to the radical SAM superfamily. Lipoyl synthase family. [4Fe-4S] cluster serves as cofactor.

It localises to the mitochondrion. The enzyme catalyses [[Fe-S] cluster scaffold protein carrying a second [4Fe-4S](2+) cluster] + N(6)-octanoyl-L-lysyl-[protein] + 2 oxidized [2Fe-2S]-[ferredoxin] + 2 S-adenosyl-L-methionine + 4 H(+) = [[Fe-S] cluster scaffold protein] + N(6)-[(R)-dihydrolipoyl]-L-lysyl-[protein] + 4 Fe(3+) + 2 hydrogen sulfide + 2 5'-deoxyadenosine + 2 L-methionine + 2 reduced [2Fe-2S]-[ferredoxin]. It functions in the pathway protein modification; protein lipoylation via endogenous pathway; protein N(6)-(lipoyl)lysine from octanoyl-[acyl-carrier-protein]: step 2/2. Catalyzes the radical-mediated insertion of two sulfur atoms into the C-6 and C-8 positions of the octanoyl moiety bound to the lipoyl domains of lipoate-dependent enzymes, thereby converting the octanoylated domains into lipoylated derivatives. In Emericella nidulans (strain FGSC A4 / ATCC 38163 / CBS 112.46 / NRRL 194 / M139) (Aspergillus nidulans), this protein is Lipoyl synthase, mitochondrial.